The following is a 127-amino-acid chain: Fluoride-specific ion channel FluC (127 aa).

4 helical membrane-spanning segments follow: residues 4–24 (LDYLTIAFGGAIGAVLRYLVS), 39–59 (GTIIVNSVGSFFLSFLMFAAI), 68–88 (AILFFGTGLLGAFTTFSTFTY), and 102–122 (VAYALANLLFAFTCAYFGMIL). The Na(+) site is built by Gly78 and Thr81.

It belongs to the fluoride channel Fluc/FEX (TC 1.A.43) family.

It is found in the cell inner membrane. The catalysed reaction is fluoride(in) = fluoride(out). Its activity is regulated as follows. Na(+) is not transported, but it plays an essential structural role and its presence is essential for fluoride channel function. Functionally, fluoride-specific ion channel. Important for reducing fluoride concentration in the cell, thus reducing its toxicity. This Thermotoga maritima (strain ATCC 43589 / DSM 3109 / JCM 10099 / NBRC 100826 / MSB8) protein is Fluoride-specific ion channel FluC.